The following is a 174-amino-acid chain: Co-chaperone protein HscB homolog (174 aa).

One can recognise a J domain in the interval 2 to 74 (NYFELFKFPP…IRRAEHMLSL (73 aa)).

The protein belongs to the HscB family. As to quaternary structure, interacts with HscA and stimulates its ATPase activity.

Co-chaperone involved in the maturation of iron-sulfur cluster-containing proteins. Seems to help targeting proteins to be folded toward HscA. In Shewanella oneidensis (strain ATCC 700550 / JCM 31522 / CIP 106686 / LMG 19005 / NCIMB 14063 / MR-1), this protein is Co-chaperone protein HscB homolog.